The sequence spans 20 residues: Major extrapallial fluid protein (20 aa).

Residues 1 to 20 (NPVDDHHDDHHDAPIVEHHD) form a disordered region.

In terms of assembly, homodimer. In terms of processing, glycosylated.

Its function is as follows. Appears to be a building block of the soluble organic matrix of the shell. The protein binds calcium. The polypeptide is Major extrapallial fluid protein (Mytilus edulis (Blue mussel)).